Consider the following 344-residue polypeptide: MSVRYEQAGVNLEAGYEAVSRMKRHVARTMRPEVMTGLGSFGAMIDLGSMNMKHPILVSGTDGVGTKLKLAFALDQHDTIGIDCVAMCVNDCLVHGAEPLYFLDYIATGKAEPAKLERIVAGVAEGCVQAGCALVGGETAEMPGMYPDGEYDIAGFAVGVVEKEDLLDGSTIQDGDVVLGLASSGVHSNGFSLVRHIVEAQGLHYTDEIAMLDTTLGNALLLPTRIYAEAAKAAISTGKVQGMAHITGGGFYENVPRMLPGGLGITFDASSWPSLPVFDWLEQVGNISKQEMFNVFNMGIGYMITVRAEDVELVEAALERVGETAHRIGKVESRPGIRISGVDQ.

This sequence belongs to the AIR synthase family.

It is found in the cytoplasm. The enzyme catalyses 2-formamido-N(1)-(5-O-phospho-beta-D-ribosyl)acetamidine + ATP = 5-amino-1-(5-phospho-beta-D-ribosyl)imidazole + ADP + phosphate + H(+). It participates in purine metabolism; IMP biosynthesis via de novo pathway; 5-amino-1-(5-phospho-D-ribosyl)imidazole from N(2)-formyl-N(1)-(5-phospho-D-ribosyl)glycinamide: step 2/2. This is Phosphoribosylformylglycinamidine cyclo-ligase from Exiguobacterium sp. (strain ATCC BAA-1283 / AT1b).